The sequence spans 157 residues: MAQEKVFPMTHEGKQKLEQELEQLKTVKRKEVVERIKIARSFGDLSENSEYDSAKEEQAFVEGRITTLENMIRNAKIIEDDGGSNVVGLGKTVSFIELPDGEEESYTIVGSAEADPFEGKISNDSPIAKSLLGRKVDEEVTVQTPGGEMLVKIVKIS.

Residues 10–76 adopt a coiled-coil conformation; sequence THEGKQKLEQ…TLENMIRNAK (67 aa).

It belongs to the GreA/GreB family.

Its function is as follows. Necessary for efficient RNA polymerase transcription elongation past template-encoded arresting sites. The arresting sites in DNA have the property of trapping a certain fraction of elongating RNA polymerases that pass through, resulting in locked ternary complexes. Cleavage of the nascent transcript by cleavage factors such as GreA or GreB allows the resumption of elongation from the new 3'terminus. GreA releases sequences of 2 to 3 nucleotides. This chain is Transcription elongation factor GreA, found in Bacillus velezensis (strain DSM 23117 / BGSC 10A6 / LMG 26770 / FZB42) (Bacillus amyloliquefaciens subsp. plantarum).